The chain runs to 199 residues: Putative acetyltransferase SAR2635 (199 aa).

The protein belongs to the transferase hexapeptide repeat family.

The polypeptide is Putative acetyltransferase SAR2635 (Staphylococcus aureus (strain MRSA252)).